A 40-amino-acid polypeptide reads, in one-letter code: Dolichyl-diphosphooligosaccharide--protein glycosyltransferase subunit 4 (40 aa).

Topologically, residues 1–4 are lumenal; sequence MITD. Residues 5–25 form a helical membrane-spanning segment; the sequence is VQLAIFSNVLGVFLFLLVVAY. The Cytoplasmic segment spans residues 26–40; the sequence is HYINANTGKSSIKNK.

This sequence belongs to the OST4 family. As to quaternary structure, component of the oligosaccharyltransferase (OST) complex.

The protein localises to the endoplasmic reticulum membrane. Subunit of the oligosaccharyl transferase (OST) complex that catalyzes the initial transfer of a defined glycan (Glc(3)Man(9)GlcNAc(2) in eukaryotes) from the lipid carrier dolichol-pyrophosphate to an asparagine residue within an Asn-X-Ser/Thr consensus motif in nascent polypeptide chains, the first step in protein N-glycosylation. N-glycosylation occurs cotranslationally and the complex associates with the Sec61 complex at the channel-forming translocon complex that mediates protein translocation across the endoplasmic reticulum (ER). All subunits are required for a maximal enzyme activity. This chain is Dolichyl-diphosphooligosaccharide--protein glycosyltransferase subunit 4, found in Drosophila mojavensis (Fruit fly).